The chain runs to 220 residues: Small ribosomal subunit protein uS3c (220 aa).

One can recognise a KH type-2 domain in the interval 43-120 (IQHYVEKNTR…RLNIAIIRVA (78 aa)).

Belongs to the universal ribosomal protein uS3 family. Part of the 30S ribosomal subunit.

It is found in the plastid. Its subcellular location is the chloroplast. This chain is Small ribosomal subunit protein uS3c (rps3), found in Piper cenocladum (Ant piper).